The sequence spans 291 residues: GCN5-related N-acetyltransferase 4, chloroplastic (291 aa).

Residues 1–61 (MRSTPLGTTA…PSQINSGACN (61 aa)) constitute a chloroplast transit peptide. The N-acetyltransferase domain occupies 76–280 (IVVREARLED…RFTFMMKLVN (205 aa)). Residues 199 to 201 (VAV) and 207 to 212 (RKGIAK) contribute to the acetyl-CoA site. The residue at position 217 (K217) is an N6-acetyllysine. Acetyl-CoA is bound by residues 238–240 (NLG) and Y245. Catalysis depends on Y245, which acts as the Proton donor. N6-acetyllysine is present on residues K254 and K265.

It belongs to the acetyltransferase family. GNAT subfamily. Oligomer. Post-translationally, autoacetylated at K-217, K-254 and K-265. As to expression, expressed in green tissues.

The protein resides in the plastid. It is found in the chloroplast. It carries out the reaction an N-terminal L-alpha-aminoacyl-[protein] + acetyl-CoA = N-terminal N(alpha)-acetyl-L-alpha-aminoacyl-[protein] + CoA + H(+). It catalyses the reaction L-lysyl-[protein] + acetyl-CoA = N(6)-acetyl-L-lysyl-[protein] + CoA + H(+). The catalysed reaction is N-terminal L-alanyl-[protein] + acetyl-CoA = N-terminal N(alpha)-acetyl-L-alanyl-[protein] + CoA + H(+). The enzyme catalyses N-terminal L-seryl-[protein] + acetyl-CoA = N-terminal N(alpha)-acetyl-L-seryl-[protein] + CoA + H(+). It carries out the reaction N-terminal L-threonyl-[protein] + acetyl-CoA = N-terminal N(alpha)-acetyl-L-threonyl-[protein] + CoA + H(+). It catalyses the reaction N-terminal L-methionyl-[protein] + acetyl-CoA = N-terminal N(alpha)-acetyl-L-methionyl-[protein] + CoA + H(+). The catalysed reaction is N-terminal L-valyl-[protein] + acetyl-CoA = N-terminal N(alpha)-acetyl-L-valyl-[protein] + CoA + H(+). The enzyme catalyses N-terminal glycyl-[protein] + acetyl-CoA = N-terminal N(alpha)-acetylglycyl-[protein] + CoA + H(+). Protein acetyltransferase with dual specificity triggering both N-alpha-acetylation (NTA), with a large spectrum of modified N-termini, including methionine, alanine, serine, threonine and to a lower extent glycine and valine as substrates, and epsilon-lysine acetylation (KA) of several plastid proteins. This chain is GCN5-related N-acetyltransferase 4, chloroplastic, found in Arabidopsis thaliana (Mouse-ear cress).